A 140-amino-acid polypeptide reads, in one-letter code: Holo-[acyl-carrier-protein] synthase (140 aa).

Mg(2+)-binding residues include Asp8 and Glu62.

The protein belongs to the P-Pant transferase superfamily. AcpS family. It depends on Mg(2+) as a cofactor.

Its subcellular location is the cytoplasm. The enzyme catalyses apo-[ACP] + CoA = holo-[ACP] + adenosine 3',5'-bisphosphate + H(+). Transfers the 4'-phosphopantetheine moiety from coenzyme A to a Ser of acyl-carrier-protein. The sequence is that of Holo-[acyl-carrier-protein] synthase from Cupriavidus taiwanensis (strain DSM 17343 / BCRC 17206 / CCUG 44338 / CIP 107171 / LMG 19424 / R1) (Ralstonia taiwanensis (strain LMG 19424)).